The primary structure comprises 428 residues: AP-1 complex subunit mu-1 (428 aa).

In terms of domain architecture, MHD spans 170-426 (KNEVFLDVIE…ITMAGEYELR (257 aa)).

The protein belongs to the adaptor complexes medium subunit family. As to quaternary structure, adaptor protein complex 1 (AP-1) is a heterotetramer composed of two large adaptins (gamma-type subunit and beta-type subunit), a medium adaptin (mu-type subunit) and a small adaptin (sigma-type subunit).

It is found in the golgi apparatus. Its subcellular location is the cytoplasmic vesicle. It localises to the clathrin-coated vesicle membrane. In terms of biological role, subunit of clathrin-associated adaptor protein complex 1 that plays a role in protein sorting at the trans-Golgi network and early endosomes (TGN/EE). The AP complexes mediate the recruitment of clathrin to membranes and the recognition of sorting signals within the cytosolic tails of transmembrane cargo molecules. Functions redundantly with AP1M2 in multiple post-Golgi trafficking pathways leading from the TGN to the vacuole, the plasma membrane, and the cell-division plane. This is AP-1 complex subunit mu-1 (AP1M1) from Arabidopsis thaliana (Mouse-ear cress).